Reading from the N-terminus, the 2481-residue chain is Serine/threonine-protein kinase TOR (2481 aa).

The tract at residues 1-31 (MSTSSQSFVAGRPASMASPSQSHRFCGPSAT) is disordered. HEAT repeat units follow at residues 205–242 (VHVPEFVDAIWVALRDPQLQVRERAVEALRACLRVIEK), 292–329 (SRYREVAEIVLRYLEHRDRLVRLSITSLLPRIAHFLRD), 373–410 (HYLPTIMSHLRDAIAPRKGRPLLEAVACVGNIAKAMGS), 434–471 (DALDQITISIPSLLPTVQDRLLDCISLVLSKSHYSQAK), 569–607 (RLVEEIVEKLLRTAVADADVTVRKSIFVALFGNQCFDDY), 608–645 (LAQADSLTAIFASLNDEDLDVREYAISVAGRLSEKNPA), 737–775 (QYIPELMPLIVEALMDGAAVAKREVAVSTLGQVVQSTGY), and 781–819 (KEYPLLLGLLLKLLKGDLVWSTRREVLKVLGIMGALDPH). Positions 823 to 847 (RNQQSLSGSHGEVPRGTGDSGQPIP) are disordered. HEAT repeat units lie at residues 866–904 (YYSTVAINSLMRILRDASLLSYHKRVVRSLMIIFKSMGL), 908–945 (PYLPKVLPELFHTVRTSDENLKDFITWGLGTLVSIVRQ), 952–992 (PELL…ALND), 996–1036 (TYLP…GTLD), 1037–1075 (EHMHLLLPALIRLFKVDAPVAIRRDAIKTLTRVIPCVQV), and 1077–1114 (GHISALVHHLKLVLDGKNDELRKDAVDALCCLAHALGE). The disordered stretch occupies residues 1179 to 1204 (DPFEEGTDRNHQVNDGRLRTAGEASQ). The span at 1184 to 1198 (GTDRNHQVNDGRLRT) shows a compositional bias: basic and acidic residues. Positions 1309–1887 (LLGALAEKCR…MYPLLVACKS (579 aa)) constitute an FAT domain. Short sequence motifs (nuclear localization signal) lie at residues 1505 to 1512 (VRRAKYDE) and 2075 to 2080 (KQRPRK). The region spanning 2065–2378 (FSRQLVVITS…DEDPADIDLP (314 aa)) is the PI3K/PI4K catalytic domain. The G-loop stretch occupies residues 2071–2077 (VITSKQR). The interval 2244–2252 (GLGDRHPSN) is catalytic loop. Residues 2264-2289 (HIDFGDCFEASMNREKFPEKVPFRLT) are activation loop. Residues 2354 to 2384 (NNNPNAPADVEPDEEDEDPADIDLPQPQRST) form a disordered region. A compositionally biased stretch (acidic residues) spans 2363 to 2374 (VEPDEEDEDPAD). Residue Ser-2424 is modified to Phosphoserine. The FATC domain occupies 2449–2481 (HGLSVKVQVQKLINQATSHENLCQNYVGWCPFW).

Belongs to the PI3/PI4-kinase family. Interacts with RAPTOR1 and itself. Interacts with FKBP12 in a rapamycin-dependent manner. Binds to LST8-1. Hyperactivated upon interaction with cauliflower mosaic virus (CaMV) Tav protein. Activated by phosphorylation on Ser-2424 triggered by cauliflower mosaic virus P6 and auxin. In terms of tissue distribution, highly expressed in root meristems, shoot apical meristem (SAM) and floral buds.

It is found in the cytoplasm. The protein localises to the nucleus. It carries out the reaction L-seryl-[protein] + ATP = O-phospho-L-seryl-[protein] + ADP + H(+). It catalyses the reaction L-threonyl-[protein] + ATP = O-phospho-L-threonyl-[protein] + ADP + H(+). With respect to regulation, almost insensitive to rapamycin. Strongly repressed by specific active site inhibitors (asTORis) such as AZD-8055, TORIN2 and WYE-132, and, to a lesser extent, by KU63794, WYE-354 and TORIN1, leading to impaired photoautotrophic growth and abnormally early meristematic cells differentiation. Repression by TORIN1 leads to impaired responses to auxin, including gravitropism. Combined treatment with rapamycin and active-site inhibitors (e.g. Torin1 and AZD-8055) results in synergistic inhibition of activity and plant growth. Inhibition by KU63794 leads to reduced auxin content in root tips. AZD-8055 treatment reduces abscisic acid (ABA) levels. In addition, inhibition by AZD-8055 leads to a strong reduction of watermelon mosaic virus (WMV) infection. Functionally, essential cell growth regulator that controls development from early embryo to seed production. Controls plant growth in environmental stress conditions. Acts through the phosphorylation of downstream effectors that are recruited by the binding partner RAPTOR. Acts by activating transcription, protein synthesis and ribosome biogenesis, and inhibiting mRNA degradation and autophagy. Can phosphorylate TAP46, a regulatory subunit of protein phosphatase 2A that modulates cell growth and survival. Involved in modulating the transition from heterotrophic to photoautotrophic growth by regulating the expression of chloroplast- and photosynthesis-associated genes. Essential for auxin signaling transduction, probably acting in polysomes to maintain the active ATPK1/S6K1 (and thus TIF3H1/eIF3h) phosphorylation status that is critical for translation reinitiation (e.g. uORF-mRNAs loading). Promotes abscisic acid (ABA) biosynthesis. Involved in the regulation of sugar-mediated (e.g. glucose and sucrose) glycolysis- and mitochondrial bioenergetics-dependent root growth promotion. Required for sugar (e.g. glucose) promotion of hypocotyl elongation in the dark, by activating the brassinosteroid pathway and stabilizing BZR1. The regulation of BZR1 degradation is dependent on autophagy. Regulates the expression, phosphorylation and ribosome association of MRFs (e.g. MRF1, MRF3 and MRF4), especially under energy-deficient conditions. In terms of biological role, (Microbial infection) Binding to cauliflower mosaic virus (CaMV) Tav protein is critical for both translation reinitiation and viral fitness. When activated by CaMV P6, promotes CaMV translation by inhibiting cellular autophagy and suppressing both silencing and innate immunity, thus conferring sensitivity to P.syringae. Its function is as follows. (Microbial infection) Required during infection by some potyvirus such as Watermelon mosaic virus (WMV) but not for turnip mosaic virus (TuMV). The protein is Serine/threonine-protein kinase TOR of Arabidopsis thaliana (Mouse-ear cress).